The chain runs to 1049 residues: Multiple C2 domain and transmembrane region protein 16 (1049 aa).

Residues 1-112 (MATTRKLVVE…VGQGEEALIY (112 aa)) form the C2 1 domain. The segment at 136-249 (DEKPPPLKPT…PPQNQPDGED (114 aa)) is disordered. 2 stretches are compositionally biased toward basic and acidic residues: residues 153–170 (VEEK…ESKP) and 226–238 (ESDK…KPVE). 3 C2 domains span residues 302–426 (TSEI…PQWY), 460–582 (TAGN…SRWL), and 617–745 (VCSD…RNTY). Positions 338, 390, 393, and 398 each coordinate Ca(2+). 2 consecutive transmembrane segments (helical) span residues 883-903 (VMLI…LFVI) and 989-1009 (ATGI…LVPT).

Belongs to the MCTP family. Ca(2+) is required as a cofactor. As to expression, expressed in the vascular tissues of roots, cotyledons and rosette leaves. Accumulates in roots meristems and shoot apical meristems (SAMs). Observed in flowers.

It localises to the endoplasmic reticulum membrane. In terms of biological role, may function as a signaling molecule by regulating the trafficking of other regulators. The chain is Multiple C2 domain and transmembrane region protein 16 from Arabidopsis thaliana (Mouse-ear cress).